We begin with the raw amino-acid sequence, 457 residues long: Hydrogenobyrinate a,c-diamide synthase (457 aa).

Positions 255-441 (TVAIAAGRAF…LHTHPAATPG (187 aa)) constitute a GATase cobBQ-type domain. C337 functions as the Nucleophile in the catalytic mechanism.

Belongs to the CobB/CbiA family. Requires Mg(2+) as cofactor.

It carries out the reaction hydrogenobyrinate + 2 L-glutamine + 2 ATP + 2 H2O = hydrogenobyrinate a,c-diamide + 2 L-glutamate + 2 ADP + 2 phosphate + 2 H(+). It participates in cofactor biosynthesis; adenosylcobalamin biosynthesis; cob(II)yrinate a,c-diamide from precorrin-2 (aerobic route): step 9/10. Functionally, catalyzes the ATP-dependent amidation of the two carboxylate groups at positions a and c of hydrogenobyrinate, using either L-glutamine or ammonia as the nitrogen source. This is Hydrogenobyrinate a,c-diamide synthase from Mycobacterium bovis (strain ATCC BAA-935 / AF2122/97).